Consider the following 639-residue polypeptide: MSASTSTTAAASQDACYISLLGLAEYFRTSQPPNIKKCIQCLQALFTFMPPSKVEARTHLQMGQILMAYTQNIDLARHHLEKAWSISEPLANFDVKFDTASLLAQLHLQTDQNSNQAKAMLRRAVELSQHNVYWHCKLLLQLAQIHASDREYSLASDLLAVGAENADEAGATYLKVLFLLSRAMILMIERKTNDVLALLNSAGQIIDNNIPNPHQKEYLKVFFLVLQVCYYLALGQVKTVKPSLKQLQMSIQTIMAPNWPSDETIFGANQLEMFVWLPKEQLYVLVYLVTVSHSMMAGYMDKAQKYTEKALTQIEKLKQQEDKPILSVFKVILLEHIVMCRMVMGNRELAIREIAAARDVCLAAPQRSLLRRHSAQLHCLIGLYSMSTSFFEHAERQFLVCVSETNERDLKLFANLNLAIIYLRTKRDTDLKQILDAVSSENTNTYSSQALMGGFYYVQGLHAFHKNSFHEAKRFLRETLKMANAEDLNRLTSCSLVLLSHVFLSIGNSKESMNMVTPAMQLASKIPDIHVQLWGSAILKDLHRMSKDAQHEKDAYANHLKYSENLIADQRKSVQSSHHELVNWFHGDPPVTSGPPTTTAVAMILPDSSAAVGPVPVIASTSTGMQQAIQPVGQYGQFY.

2 TPR repeats span residues 453–486 and 493–526; these read GGFY…ANAE and SCSL…ASKI.

This sequence belongs to the SCC4/mau-2 family. As to quaternary structure, interacts with Nipped-B to form the cohesin loading complex.

It is found in the nucleus. Its subcellular location is the nucleoplasm. In terms of biological role, required for association of the cohesin complex with chromatin during interphase. Plays a role in sister chromatid cohesion and normal progression through prometaphase. The protein is MAU2 chromatid cohesion factor homolog of Drosophila ananassae (Fruit fly).